The primary structure comprises 159 residues: Endoribonuclease YbeY (159 aa).

Zn(2+)-binding residues include His125, His129, and His135.

This sequence belongs to the endoribonuclease YbeY family. Zn(2+) serves as cofactor.

Its subcellular location is the cytoplasm. Functionally, single strand-specific metallo-endoribonuclease involved in late-stage 70S ribosome quality control and in maturation of the 3' terminus of the 16S rRNA. The sequence is that of Endoribonuclease YbeY from Limosilactobacillus reuteri (strain DSM 20016) (Lactobacillus reuteri).